The sequence spans 181 residues: Protein GrpE (181 aa).

Polar residues predominate over residues 1 to 13 (MENTQENPATQSA). The disordered stretch occupies residues 1–34 (MENTQENPATQSAEDIGSAKQAAQGAAPAAEAAD). The segment covering 19–34 (AKQAAQGAAPAAEAAD) has biased composition (low complexity).

It belongs to the GrpE family. As to quaternary structure, homodimer.

The protein resides in the cytoplasm. Its function is as follows. Participates actively in the response to hyperosmotic and heat shock by preventing the aggregation of stress-denatured proteins, in association with DnaK and GrpE. It is the nucleotide exchange factor for DnaK and may function as a thermosensor. Unfolded proteins bind initially to DnaJ; upon interaction with the DnaJ-bound protein, DnaK hydrolyzes its bound ATP, resulting in the formation of a stable complex. GrpE releases ADP from DnaK; ATP binding to DnaK triggers the release of the substrate protein, thus completing the reaction cycle. Several rounds of ATP-dependent interactions between DnaJ, DnaK and GrpE are required for fully efficient folding. The sequence is that of Protein GrpE from Burkholderia vietnamiensis (strain G4 / LMG 22486) (Burkholderia cepacia (strain R1808)).